Here is a 488-residue protein sequence, read N- to C-terminus: Coiled-coil domain-containing protein 77 (488 aa).

The disordered stretch occupies residues 21 to 48 (GVAVSGPTKRRGMADSLESTPLPSPEDR). Serine 36 carries the post-translational modification Phosphoserine. A Glycyl lysine isopeptide (Lys-Gly) (interchain with G-Cter in SUMO2) cross-link involves residue lysine 51. Coiled-coil stretches lie at residues 55-118 (SKEL…QVCL) and 208-488 (KESS…LRLC). A disordered region spans residues 192–213 (FKADPKISKRRPSRERKESSEH).

This Homo sapiens (Human) protein is Coiled-coil domain-containing protein 77 (CCDC77).